Here is a 37-residue protein sequence, read N- to C-terminus: Antifungal protein 4 (37 aa).

It localises to the secreted. Possesses antifungal activity against P.infestans but not F.graminearum. This is Antifungal protein 4 from Malva parviflora (Little mallow).